Consider the following 412-residue polypeptide: Multifunctional CCA protein (412 aa).

ATP is bound by residues G8 and R11. Positions 8 and 11 each coordinate CTP. The Mg(2+) site is built by E21 and D23. Residues R92, R138, and R141 each contribute to the ATP site. R92, R138, and R141 together coordinate CTP. One can recognise an HD domain in the interval 227-328 (TGIHTMMTVA…IKLFYAIDVW (102 aa)).

This sequence belongs to the tRNA nucleotidyltransferase/poly(A) polymerase family. Bacterial CCA-adding enzyme type 1 subfamily. Monomer. Can also form homodimers and oligomers. The cofactor is Mg(2+). It depends on Ni(2+) as a cofactor.

It catalyses the reaction a tRNA precursor + 2 CTP + ATP = a tRNA with a 3' CCA end + 3 diphosphate. The enzyme catalyses a tRNA with a 3' CCA end + 2 CTP + ATP = a tRNA with a 3' CCACCA end + 3 diphosphate. Functionally, catalyzes the addition and repair of the essential 3'-terminal CCA sequence in tRNAs without using a nucleic acid template. Adds these three nucleotides in the order of C, C, and A to the tRNA nucleotide-73, using CTP and ATP as substrates and producing inorganic pyrophosphate. tRNA 3'-terminal CCA addition is required both for tRNA processing and repair. Also involved in tRNA surveillance by mediating tandem CCA addition to generate a CCACCA at the 3' terminus of unstable tRNAs. While stable tRNAs receive only 3'-terminal CCA, unstable tRNAs are marked with CCACCA and rapidly degraded. This Baumannia cicadellinicola subsp. Homalodisca coagulata protein is Multifunctional CCA protein.